A 155-amino-acid chain; its full sequence is Myosin light chain alkali (155 aa).

EF-hand domains are found at residues 7–41 (REVENVEFVFEVMGSPGEGIDAVDLGDALRALNLN) and 80–115 (GCYEDFIECLKLYDKEENGTMMLAELQHALLALGES).

Myosin is a hexamer of 2 heavy chains and 4 light chains.

In Drosophila simulans (Fruit fly), this protein is Myosin light chain alkali (Mlc1).